Consider the following 410-residue polypeptide: Succinyl-CoA:(R)-benzylsuccinate CoA-transferase subunit BbsE (410 aa).

This sequence belongs to the CoA-transferase III family. Heterotetramer composed of 2 BbsE subunits and 2 BbsF subunits.

The enzyme catalyses (R)-2-benzylsuccinate + succinyl-CoA = (R)-2-benzylsuccinyl-CoA + succinate. The protein operates within xenobiotic degradation; toluene degradation. With respect to regulation, inhibited by (S)-benzylsuccinyl-CoA. Its function is as follows. Catalyzes the reversible conversion of (R)-2-benzylsuccinate to (R)-2-benzylsuccinyl-CoA. Inactive with (S)-benzylsuccinate. This is Succinyl-CoA:(R)-benzylsuccinate CoA-transferase subunit BbsE (bbsE) from Thauera aromatica.